The sequence spans 320 residues: Nucleotide-binding protein Pcryo_0127 (320 aa).

32–39 (GRSGSGKT) provides a ligand contact to ATP. Residue 82-85 (DIRT) participates in GTP binding.

It belongs to the RapZ-like family.

Its function is as follows. Displays ATPase and GTPase activities. The polypeptide is Nucleotide-binding protein Pcryo_0127 (Psychrobacter cryohalolentis (strain ATCC BAA-1226 / DSM 17306 / VKM B-2378 / K5)).